Consider the following 450-residue polypeptide: Oxygen-independent coproporphyrinogen III oxidase (450 aa).

Residues 45 to 282 (IPAGGSISLY…RTLILWDGYQ (238 aa)) enclose the Radical SAM core domain. Tyrosine 54 lines the S-adenosyl-L-methionine pocket. [4Fe-4S] cluster is bound by residues cysteine 60 and cysteine 64. S-adenosyl-L-methionine is bound at residue phenylalanine 66. Cysteine 67 is a [4Fe-4S] cluster binding site. S-adenosyl-L-methionine contacts are provided by residues glycine 111, 112-113 (GT), glutamate 144, glutamine 171, arginine 183, aspartate 208, alanine 242, and isoleucine 328.

Belongs to the anaerobic coproporphyrinogen-III oxidase family. As to quaternary structure, monomer. Requires [4Fe-4S] cluster as cofactor.

The protein resides in the cytoplasm. It carries out the reaction coproporphyrinogen III + 2 S-adenosyl-L-methionine = protoporphyrinogen IX + 2 5'-deoxyadenosine + 2 L-methionine + 2 CO2. The protein operates within porphyrin-containing compound metabolism; protoporphyrin-IX biosynthesis; protoporphyrinogen-IX from coproporphyrinogen-III (AdoMet route): step 1/1. Involved in the heme and chlorophyll biosynthesis. Catalyzes the anaerobic oxidative decarboxylation of propionate groups of rings A and B of coproporphyrinogen III to yield the vinyl groups in protoporphyrinogen IX. This chain is Oxygen-independent coproporphyrinogen III oxidase (hemZ), found in Cereibacter sphaeroides (strain ATCC 17023 / DSM 158 / JCM 6121 / CCUG 31486 / LMG 2827 / NBRC 12203 / NCIMB 8253 / ATH 2.4.1.) (Rhodobacter sphaeroides).